The primary structure comprises 221 residues: Immediate early response gene 2 protein (221 aa).

At M1 the chain carries N-acetylmethionine. Residues 105 to 155 (ETPALCDPPPARVSRKRRSSSDLSDGSDAGLVPSKKARLEEVEGEATSEVP) are disordered. The span at 125 to 136 (SDLSDGSDAGLV) shows a compositional bias: low complexity.

The protein belongs to the IER family.

The protein resides in the cytoplasm. It localises to the nucleus. Its function is as follows. DNA-binding protein that seems to act as a transcription factor. Involved in the regulation of neuronal differentiation, acts upon JNK-signaling pathway activation and plays a role in neurite outgrowth in hippocampal cells. May mediate with FIBP FGF-signaling in the establishment of laterality in the embryo. Promotes cell motility, seems to stimulate tumor metastasis. The sequence is that of Immediate early response gene 2 protein (Ier2) from Mus musculus (Mouse).